We begin with the raw amino-acid sequence, 209 residues long: D-aminoacyl-tRNA deacylase 1 (209 aa).

Mg(2+)-binding residues include Val-4, Gln-6, and Cys-28. Residues 139–140 (GP) carry the Gly-cisPro motif, important for rejection of L-amino acids motif. Positions 142–209 (TIELESPAPG…EGDVSSEREP (68 aa)) are disordered. Composition is skewed to basic and acidic residues over residues 159–170 (QLSKLEKQQQRK) and 181–194 (SSKE…EDRS). Phosphoserine is present on residues Ser-197, Ser-204, and Ser-205.

It belongs to the DTD family. As to quaternary structure, homodimer. Interacts with CDC45 and TOPBP1. In terms of processing, preferentially phosphorylated in cells arrested early in S phase. Phosphorylation in the C-terminus weakens the interaction with CDC45. In terms of tissue distribution, expressed in many adult and fetal tissues. Highest levels in testis, ovary, spleen and in adult and fetal brain.

It is found in the nucleus. Its subcellular location is the cytoplasm. The enzyme catalyses glycyl-tRNA(Ala) + H2O = tRNA(Ala) + glycine + H(+). It carries out the reaction a D-aminoacyl-tRNA + H2O = a tRNA + a D-alpha-amino acid + H(+). Functionally, possible ATPase involved in DNA replication, may facilitate loading of CDC45 onto pre-replication complexes. Its function is as follows. An aminoacyl-tRNA editing enzyme that deacylates mischarged D-aminoacyl-tRNAs. Also deacylates mischarged glycyl-tRNA(Ala), protecting cells against glycine mischarging by AlaRS. Acts via tRNA-based rather than protein-based catalysis; rejects L-amino acids rather than detecting D-amino acids in the active site. By recycling D-aminoacyl-tRNA to D-amino acids and free tRNA molecules, this enzyme counteracts the toxicity associated with the formation of D-aminoacyl-tRNA entities in vivo and helps enforce protein L-homochirality. This Homo sapiens (Human) protein is D-aminoacyl-tRNA deacylase 1 (DTD1).